A 193-amino-acid polypeptide reads, in one-letter code: Probable GTP-binding protein EngB (193 aa).

The region spanning 19–188 is the EngB-type G domain; sequence SVKEVCFMGR…HKQIFELFKA (170 aa). GTP-binding positions include 27–34, 53–57, 70–73, 136–139, and 167–169; these read GRSNVGKS, GRTQL, DLPG, NKFD, and VSA. 2 residues coordinate Mg(2+): Ser-34 and Thr-55.

The protein belongs to the TRAFAC class TrmE-Era-EngA-EngB-Septin-like GTPase superfamily. EngB GTPase family. Mg(2+) serves as cofactor.

In terms of biological role, necessary for normal cell division and for the maintenance of normal septation. This chain is Probable GTP-binding protein EngB, found in Mycoplasma pneumoniae (strain ATCC 29342 / M129 / Subtype 1) (Mycoplasmoides pneumoniae).